The following is a 271-amino-acid chain: Undecaprenyl-diphosphatase 2 (271 aa).

8 helical membrane passes run 1-21 (MNFFQAIILAIAQGVSELFPI), 46-66 (NFLEFVVMMHIGTTISLIVYF), 88-108 (ALIVIGTIPAIILGAIFEQTI), 111-131 (AFSDVIVASIFLIFNGLLLFF), 146-166 (LKGWQALVIGCFQSLALIPGF), 190-210 (SMLLSTPMVAGAATLEIPKLI), 220-240 (LSLIGGIVAGLAAFLSIYILM), and 251-271 (MLPFAIYCIVIGIGVLASKAI).

The protein belongs to the UppP family.

Its subcellular location is the cell membrane. The enzyme catalyses di-trans,octa-cis-undecaprenyl diphosphate + H2O = di-trans,octa-cis-undecaprenyl phosphate + phosphate + H(+). Its function is as follows. Catalyzes the dephosphorylation of undecaprenyl diphosphate (UPP). Confers resistance to bacitracin. The sequence is that of Undecaprenyl-diphosphatase 2 from Oenococcus oeni (strain ATCC BAA-331 / PSU-1).